We begin with the raw amino-acid sequence, 126 residues long: Large ribosomal subunit protein bL12 (126 aa).

It belongs to the bacterial ribosomal protein bL12 family. As to quaternary structure, homodimer. Part of the ribosomal stalk of the 50S ribosomal subunit. Forms a multimeric L10(L12)X complex, where L10 forms an elongated spine to which 2 to 4 L12 dimers bind in a sequential fashion. Binds GTP-bound translation factors.

Its function is as follows. Forms part of the ribosomal stalk which helps the ribosome interact with GTP-bound translation factors. Is thus essential for accurate translation. The polypeptide is Large ribosomal subunit protein bL12 (Koribacter versatilis (strain Ellin345)).